We begin with the raw amino-acid sequence, 90 residues long: Nodulation protein F (90 aa).

The Carrier domain maps to 4–89; that stretch reads QLESEIIGII…RHSGSHPRLA (86 aa). An O-(pantetheine 4'-phosphoryl)serine modification is found at serine 46. The interval 65–90 is disordered; sequence RDEHGRGVVGSPERRRHSGSHPRLAH. Basic residues predominate over residues 78–90; sequence RRRHSGSHPRLAH.

In terms of processing, 4'-phosphopantetheine is transferred from CoA to a specific serine of apo-NodF.

In terms of biological role, proposed to synthesize nod factor fatty acyl chain. Involved in trans-2,trans-4,trans-6,cis-11-octadecatetraenoic acid biosynthesis. This is Nodulation protein F (nodF) from Rhizobium meliloti (Ensifer meliloti).